The chain runs to 74 residues: ATP synthase subunit c (74 aa).

The next 2 membrane-spanning stretches (helical) occupy residues 8 to 28 (FIGI…VSNI) and 52 to 72 (IGAG…MLLI).

The protein belongs to the ATPase C chain family. In terms of assembly, F-type ATPases have 2 components, F(1) - the catalytic core - and F(0) - the membrane proton channel. F(1) has five subunits: alpha(3), beta(3), gamma(1), delta(1), epsilon(1). F(0) has three main subunits: a(1), b(2) and c(10-14). The alpha and beta chains form an alternating ring which encloses part of the gamma chain. F(1) is attached to F(0) by a central stalk formed by the gamma and epsilon chains, while a peripheral stalk is formed by the delta and b chains.

The protein resides in the cell inner membrane. In terms of biological role, f(1)F(0) ATP synthase produces ATP from ADP in the presence of a proton or sodium gradient. F-type ATPases consist of two structural domains, F(1) containing the extramembraneous catalytic core and F(0) containing the membrane proton channel, linked together by a central stalk and a peripheral stalk. During catalysis, ATP synthesis in the catalytic domain of F(1) is coupled via a rotary mechanism of the central stalk subunits to proton translocation. Key component of the F(0) channel; it plays a direct role in translocation across the membrane. A homomeric c-ring of between 10-14 subunits forms the central stalk rotor element with the F(1) delta and epsilon subunits. The polypeptide is ATP synthase subunit c (Rickettsia prowazekii (strain Madrid E)).